The chain runs to 219 residues: Multiple organellar RNA editing factor 2, chloroplastic (219 aa).

The N-terminal 48 residues, 1-48 (MALPLSGTRHLTRALLSNVTLMAPPRIPSSVHYGGSRLGCSTRFFSIR), are a transit peptide targeting the chloroplast. A disordered region spans residues 182-219 (VQRSPERQRRVEPQPQRAQDRPRYNDRTRYSRRRENTR). Residues 185 to 219 (SPERQRRVEPQPQRAQDRPRYNDRTRYSRRRENTR) are compositionally biased toward basic and acidic residues.

This sequence belongs to the MORF family. In terms of assembly, homodimer and heterodimer with MORF9. Interacts with protoporphyrinogen oxidase 1 PPOX1. Heterodimers with MORF8/RIP1 and MORF9/RIP9. Interacts with PCMP-A2/PMD1. Interacts with ORRM1. Interacts with ORRM6.

It localises to the plastid. Its subcellular location is the chloroplast. Functionally, involved in plastid rRNA processing and consequently in translation and early chloroplast differentiation. Involved in organellar RNA editing. Required for the processing of multiple editing sites in plastids. The chain is Multiple organellar RNA editing factor 2, chloroplastic from Arabidopsis thaliana (Mouse-ear cress).